A 1059-amino-acid polypeptide reads, in one-letter code: MTNSAYPRTDLGADQRGGSPNFPALEAQVLDYWSNDDTFRASIARCDDAPEYVFYDGPPFANGLPHYGHLLTGYVKDIVPRYRTMCGYKVERRFGWDTHGLPAELEVERQLGITDKSQIDAMGIAAFNEACRKSVLRYTEEWQAYVTRQARWVDFDNDYKTLDLSYMESVIWAFKQLWDKGLAYESYRVLPYCWRDETPLSNHELRMDDDVYQSRQDPAVTLGFKVLGGDDEDLVGAYLLVWTTTPWTLPSNLAVAVHPDVTYVDVRAGDRRFVLAQARLTAYARELGDEPEVLATYRGADLLGRHYLPPFQYFYESARNAFQVLPGDFVTTDDGTGIVHIAPAYGEDDMATADKVGIVPVTPVDSNGCFDATVPDYQGQHVFEANAQIIRDLKNQSGSAAVNGAVLLRHETYEHPYPHCWRCRNPLIYRAVSSWFVAVTEFRDRMVELNQQITWYPEHVKDGQFGKWLQGARDWSISRNRYWGTPIPVWKSDDPDYPRIDVYGSLDELERDFGVRPTNLHRPYIDELTRPNPDDPTGLSTMRRIPDVFDVWFDSGSMPYAQVHYPFENDDWFDGFDSADSDKQVDAHYPGDFIVEYIGQARGWFYTLHVLATALFDRPAFKTCIAHGVVLGSNGQKMSKSLRNYPDVTEIFDRDGSDAMRWFLMASPILRGGNLIITEPGIREGMRQVLLPLWNAYSFLALYAPKIGTWHTDVSHVLDRYILAKLAVLRDDLSQAMEVCDISGACEQLRQFTEPLTNWYLRRSRARFWDEDVDAIDTLHTVLEVTARLAAPLLPLITEIIWRSVTGGRSVHLTDWPQANQLPADPDLVAVMDQVRQVCSAASSLRKAKKLRVRLPLPKLVVAVYNSQRLKPYIDLIGDELNVKQIELTDAIDTYGRFEFTVNARVAGPRLGRDVQAAIKVVKAGEGVANPDGTLTAGPVVLQPDEYSSRLVAANPEFTAELPDGSGLVVLDDTVTPELEAEGWAKDRIRELQELRKLIGLDVSDRIRVLMSVPAERADWARVHRDFIAREILATSFEFGEPADSVAIGDGVRVSLLKV.

The short motif at 59–69 is the 'HIGH' region element; sequence PFANGLPHYGH. The 'KMSKS' region motif lies at 637–641; that stretch reads KMSKS. Position 640 (K640) interacts with ATP.

It belongs to the class-I aminoacyl-tRNA synthetase family. IleS type 2 subfamily. In terms of assembly, monomer. The cofactor is Zn(2+).

It localises to the cytoplasm. The catalysed reaction is tRNA(Ile) + L-isoleucine + ATP = L-isoleucyl-tRNA(Ile) + AMP + diphosphate. Catalyzes the attachment of isoleucine to tRNA(Ile). As IleRS can inadvertently accommodate and process structurally similar amino acids such as valine, to avoid such errors it has two additional distinct tRNA(Ile)-dependent editing activities. One activity is designated as 'pretransfer' editing and involves the hydrolysis of activated Val-AMP. The other activity is designated 'posttransfer' editing and involves deacylation of mischarged Val-tRNA(Ile). The chain is Isoleucine--tRNA ligase from Mycobacterium leprae (strain TN).